Reading from the N-terminus, the 444-residue chain is 23S rRNA (uracil(1939)-C(5))-methyltransferase RlmD (444 aa).

Residues 5 to 67 enclose the TRAM domain; it reads RNRFDRTPFQ…RHFDEAKTVE (63 aa). [4Fe-4S] cluster is bound by residues cysteine 80, cysteine 86, cysteine 89, and cysteine 168. S-adenosyl-L-methionine-binding residues include glutamine 276, phenylalanine 305, asparagine 310, glutamate 326, aspartate 353, and aspartate 374. The active-site Nucleophile is cysteine 400.

The protein belongs to the class I-like SAM-binding methyltransferase superfamily. RNA M5U methyltransferase family. RlmD subfamily.

The catalysed reaction is uridine(1939) in 23S rRNA + S-adenosyl-L-methionine = 5-methyluridine(1939) in 23S rRNA + S-adenosyl-L-homocysteine + H(+). Functionally, catalyzes the formation of 5-methyl-uridine at position 1939 (m5U1939) in 23S rRNA. The polypeptide is 23S rRNA (uracil(1939)-C(5))-methyltransferase RlmD (Xanthomonas oryzae pv. oryzae (strain MAFF 311018)).